A 128-amino-acid chain; its full sequence is Azurin (128 aa).

In terms of domain architecture, Plastocyanin-like spans 1–128; sequence AECSVDIQGN…ALMKGTLTLK (128 aa). Cys-3 and Cys-26 are joined by a disulfide. His-46, Cys-112, His-117, and Met-121 together coordinate Cu cation.

It localises to the periplasm. Its function is as follows. Transfers electrons from cytochrome c551 to cytochrome oxidase. This is Azurin from Pseudomonas aeruginosa.